Consider the following 430-residue polypeptide: Enolase (430 aa).

(2R)-2-phosphoglycerate is bound at residue Gln-163. Residue Glu-205 is the Proton donor of the active site. Asp-242, Glu-287, and Asp-314 together coordinate Mg(2+). Lys-339, Arg-368, Ser-369, and Lys-390 together coordinate (2R)-2-phosphoglycerate. Lys-339 serves as the catalytic Proton acceptor.

It belongs to the enolase family. Mg(2+) serves as cofactor.

Its subcellular location is the cytoplasm. The protein resides in the secreted. It is found in the cell surface. It carries out the reaction (2R)-2-phosphoglycerate = phosphoenolpyruvate + H2O. The protein operates within carbohydrate degradation; glycolysis; pyruvate from D-glyceraldehyde 3-phosphate: step 4/5. In terms of biological role, catalyzes the reversible conversion of 2-phosphoglycerate (2-PG) into phosphoenolpyruvate (PEP). It is essential for the degradation of carbohydrates via glycolysis. The chain is Enolase from Alkaliphilus metalliredigens (strain QYMF).